Consider the following 209-residue polypeptide: Large ribosomal subunit protein uL3 (209 aa).

The interval 127–151 (SGGPSSHGSKFHRHLGGTGQATTPA) is disordered.

It belongs to the universal ribosomal protein uL3 family. As to quaternary structure, part of the 50S ribosomal subunit. Forms a cluster with proteins L14 and L19.

One of the primary rRNA binding proteins, it binds directly near the 3'-end of the 23S rRNA, where it nucleates assembly of the 50S subunit. The protein is Large ribosomal subunit protein uL3 of Borrelia turicatae (strain 91E135).